The chain runs to 326 residues: Tryptophan--tRNA ligase (326 aa).

ATP is bound by residues 11–13 (QPT) and 19–20 (GN). A 'HIGH' region motif is present at residues 12–20 (PTGQIHLGN). Residue Asp135 participates in L-tryptophan binding. Residues 147-149 (GED), Val186, and 195-199 (KMSKS) each bind ATP. A 'KMSKS' region motif is present at residues 195–199 (KMSKS).

Belongs to the class-I aminoacyl-tRNA synthetase family. In terms of assembly, homodimer.

Its subcellular location is the cytoplasm. It catalyses the reaction tRNA(Trp) + L-tryptophan + ATP = L-tryptophyl-tRNA(Trp) + AMP + diphosphate + H(+). Catalyzes the attachment of tryptophan to tRNA(Trp). The chain is Tryptophan--tRNA ligase from Helicobacter pylori (strain J99 / ATCC 700824) (Campylobacter pylori J99).